Reading from the N-terminus, the 637-residue chain is Chaperone protein HtpG (637 aa).

Residues 1-330 (MATAPASHAF…TEDLPLNISR (330 aa)) are a; substrate-binding. The tract at residues 331–551 (ETLQENVVVR…GGASTSSMDR (221 aa)) is b. The tract at residues 552–637 (LLRVLHKDES…GDWYKAVRGL (86 aa)) is c.

It belongs to the heat shock protein 90 family. Homodimer.

Its subcellular location is the cytoplasm. Molecular chaperone. Has ATPase activity. The protein is Chaperone protein HtpG of Nitratidesulfovibrio vulgaris (strain ATCC 29579 / DSM 644 / CCUG 34227 / NCIMB 8303 / VKM B-1760 / Hildenborough) (Desulfovibrio vulgaris).